Reading from the N-terminus, the 364-residue chain is MQDRQKAQDYRALLLADTPLIDVRAPIEFEQGAMPGAINLPLMMDDERAAVGTCYKRQGADAALALGHRLVCGDIRQQRLEAWKAAYQRFPNGYLCCARGGQRSHIVQRWLKETGIDCPLIEGGYKALRQTAIQATWQLAQKPILLIGGCTGSGKTQLVRQQPNGVDLEGLARHRGSSFGRTLNPQLSQASFENKLAVELLKINAHQTLKRWVLEDEGRTIGANHLPECLRERMAQAPIAVVEDPFALRLERLREEYFIRMHHDFTHAYGDEAGWQAYSEYLHHGLFAIRRRLGLQRFAELTDTLDRALAEQLSSGSTDGHMAWLVPLLNEYYDPMYRYQLEKKAANIVFRGTWQDVANWLKEQ.

The 124-residue stretch at 14 to 137 (LLADTPLIDV…LRQTAIQATW (124 aa)) folds into the Rhodanese domain. The active-site S-selanylcysteine intermediate is the cysteine 97.

It belongs to the SelU family. In terms of assembly, monomer.

It carries out the reaction 5-methylaminomethyl-2-thiouridine(34) in tRNA + selenophosphate + (2E)-geranyl diphosphate + H2O + H(+) = 5-methylaminomethyl-2-selenouridine(34) in tRNA + (2E)-thiogeraniol + phosphate + diphosphate. It catalyses the reaction 5-methylaminomethyl-2-thiouridine(34) in tRNA + (2E)-geranyl diphosphate = 5-methylaminomethyl-S-(2E)-geranyl-thiouridine(34) in tRNA + diphosphate. The catalysed reaction is 5-methylaminomethyl-S-(2E)-geranyl-thiouridine(34) in tRNA + selenophosphate + H(+) = 5-methylaminomethyl-2-(Se-phospho)selenouridine(34) in tRNA + (2E)-thiogeraniol. The enzyme catalyses 5-methylaminomethyl-2-(Se-phospho)selenouridine(34) in tRNA + H2O = 5-methylaminomethyl-2-selenouridine(34) in tRNA + phosphate. Functionally, involved in the post-transcriptional modification of the uridine at the wobble position (U34) of tRNA(Lys), tRNA(Glu) and tRNA(Gln). Catalyzes the conversion of 2-thiouridine (S2U-RNA) to 2-selenouridine (Se2U-RNA). Acts in a two-step process involving geranylation of 2-thiouridine (S2U) to S-geranyl-2-thiouridine (geS2U) and subsequent selenation of the latter derivative to 2-selenouridine (Se2U) in the tRNA chain. The polypeptide is tRNA 2-selenouridine synthase (Salmonella paratyphi A (strain ATCC 9150 / SARB42)).